Reading from the N-terminus, the 152-residue chain is Deoxyuridine 5'-triphosphate nucleotidohydrolase (152 aa).

Residues 72-74 (RSG), N85, 89-91 (TID), and K99 contribute to the substrate site.

The protein belongs to the dUTPase family. Requires Mg(2+) as cofactor.

The enzyme catalyses dUTP + H2O = dUMP + diphosphate + H(+). It participates in pyrimidine metabolism; dUMP biosynthesis; dUMP from dCTP (dUTP route): step 2/2. Functionally, this enzyme is involved in nucleotide metabolism: it produces dUMP, the immediate precursor of thymidine nucleotides and it decreases the intracellular concentration of dUTP so that uracil cannot be incorporated into DNA. This chain is Deoxyuridine 5'-triphosphate nucleotidohydrolase, found in Bradyrhizobium diazoefficiens (strain JCM 10833 / BCRC 13528 / IAM 13628 / NBRC 14792 / USDA 110).